Reading from the N-terminus, the 319-residue chain is Ribosomal RNA small subunit methyltransferase H (319 aa).

S-adenosyl-L-methionine-binding positions include 39–41 (GGH), D59, F83, D104, and Q111.

Belongs to the methyltransferase superfamily. RsmH family.

Its subcellular location is the cytoplasm. The catalysed reaction is cytidine(1402) in 16S rRNA + S-adenosyl-L-methionine = N(4)-methylcytidine(1402) in 16S rRNA + S-adenosyl-L-homocysteine + H(+). Specifically methylates the N4 position of cytidine in position 1402 (C1402) of 16S rRNA. In Ralstonia nicotianae (strain ATCC BAA-1114 / GMI1000) (Ralstonia solanacearum), this protein is Ribosomal RNA small subunit methyltransferase H.